A 366-amino-acid chain; its full sequence is tRNA/tmRNA (uracil-C(5))-methyltransferase (366 aa).

Positions 190, 218, 223, 239, and 299 each coordinate S-adenosyl-L-methionine. Cysteine 324 acts as the Nucleophile in catalysis. Glutamate 358 acts as the Proton acceptor in catalysis.

This sequence belongs to the class I-like SAM-binding methyltransferase superfamily. RNA M5U methyltransferase family. TrmA subfamily.

It carries out the reaction uridine(54) in tRNA + S-adenosyl-L-methionine = 5-methyluridine(54) in tRNA + S-adenosyl-L-homocysteine + H(+). The catalysed reaction is uridine(341) in tmRNA + S-adenosyl-L-methionine = 5-methyluridine(341) in tmRNA + S-adenosyl-L-homocysteine + H(+). Its function is as follows. Dual-specificity methyltransferase that catalyzes the formation of 5-methyluridine at position 54 (m5U54) in all tRNAs, and that of position 341 (m5U341) in tmRNA (transfer-mRNA). This is tRNA/tmRNA (uracil-C(5))-methyltransferase from Klebsiella pneumoniae subsp. pneumoniae (strain ATCC 700721 / MGH 78578).